Reading from the N-terminus, the 251-residue chain is Blue-light absorbing proteorhodopsin (251 aa).

The signal sequence occupies residues 1–18 (MGKLLLILGSAIALPSFA). Helical transmembrane passes span 30 to 50 (VGVS…FFFV), 65 to 85 (VSGL…GVWI), 97 to 117 (IDWL…LAAC), 120 to 140 (VAAS…GAGF), 144 to 164 (AGLA…LYMI), 190 to 210 (MMMI…AGYL), and 223 to 243 (LIYN…IWNV). At Lys-233 the chain carries N6-(retinylidene)lysine.

It belongs to the archaeal/bacterial/fungal opsin family. In terms of processing, contains one covalently linked retinal chromophore.

Its subcellular location is the cell membrane. Light-driven proton pump. May have a regulatory rather than energy harvesting function, based on light-induced opening of proton channels, to modulate cell physiology depending on light intensity variations. Could be, therefore, a sensory rhodopsin, potentially associated with a transducer component. This chain is Blue-light absorbing proteorhodopsin, found in Gamma-proteobacterium Hot 75m4.